The primary structure comprises 463 residues: A-type ATP synthase subunit B (463 aa).

This sequence belongs to the ATPase alpha/beta chains family. In terms of assembly, has multiple subunits with at least A(3), B(3), C, D, E, F, H, I and proteolipid K(x).

It localises to the cell membrane. Component of the A-type ATP synthase that produces ATP from ADP in the presence of a proton gradient across the membrane. The B chain is a regulatory subunit. The polypeptide is A-type ATP synthase subunit B (Aeropyrum pernix (strain ATCC 700893 / DSM 11879 / JCM 9820 / NBRC 100138 / K1)).